A 123-amino-acid chain; its full sequence is Large ribosomal subunit protein bL17 (123 aa).

It belongs to the bacterial ribosomal protein bL17 family. Part of the 50S ribosomal subunit. Contacts protein L32.

This is Large ribosomal subunit protein bL17 from Mycoplasma genitalium (strain ATCC 33530 / DSM 19775 / NCTC 10195 / G37) (Mycoplasmoides genitalium).